Consider the following 444-residue polypeptide: Zinc protease PqqE (444 aa).

The first 28 residues, 1–28 (MKHFSVKRLLGLSSVLLVTLGASMHAQS), serve as a signal peptide directing secretion. Position 78 (histidine 78) interacts with Zn(2+). The Proton acceptor role is filled by glutamate 81. 2 residues coordinate Zn(2+): histidine 82 and glutamate 158.

The protein belongs to the peptidase M16 family. Requires Zn(2+) as cofactor.

It is found in the secreted. With respect to regulation, can function alone, but full activity requires the presence of the non-peptidase homolog YmxG. Virulence factor that cleaves the cytoplasmic domain of the human junctional adhesion molecule A (JAM-A), compromising gastric epithelial barrier function and cell-cell adhesion. Cleavage of JAM-A occurs after Ala-285 or, to a lesser extent, before Ala-285. The polypeptide is Zinc protease PqqE (Helicobacter pylori (strain ATCC 700392 / 26695) (Campylobacter pylori)).